A 409-amino-acid polypeptide reads, in one-letter code: Salivary endonuclease (409 aa).

The first 20 residues, 1-20 (MHLQLNLCAILLSVLNGIQG), serve as a signal peptide directing secretion. Residues N37 and N102 are each glycosylated (N-linked (GlcNAc...) asparagine). The active-site Proton acceptor is the H216. N246 contacts Mg(2+). Residues N351 and N381 are each glycosylated (N-linked (GlcNAc...) asparagine).

This sequence belongs to the DNA/RNA non-specific endonuclease family. Requires Mg(2+) as cofactor. Salivary gland.

The protein resides in the secreted. Its function is as follows. Hydrolyzes single-stranded and double-stranded DNA with little sequence specificity. Inhibits contact pathway of blood coagulation in the host by preventing activation of coagulation factor XII (F12) triggered by soluble DNA. Modestly up-regulates expression of CSF2, CXCL1 and CXCL8 in cultured human dermal microvascular endothelial cells. At higher doses promotes host neutrophil recruitment at the injection site in mouse model. In terms of biological role, (Microbial infection) Increases Leishmania major survival in the host by disrupting parasite-induced neutrophil extracellular traps. Exacerbates L.major parasite infectivity and increases cutaneous lesions in mouse model. This chain is Salivary endonuclease, found in Lutzomyia longipalpis (Sand fly).